The following is a 247-amino-acid chain: ATP synthase subunit a, chloroplastic (247 aa).

Transmembrane regions (helical) follow at residues 38 to 58 (QVLITSWVVITILLGSVVIAV), 95 to 115 (VPFIGTMFLFIFVSNWSGALL), 134 to 154 (INTTVALALLTSAAYFYAGLS), 199 to 219 (LVVVVLVSLVPLVVPIPVMFL), and 220 to 240 (GLFTSGIQALIFATLAAAYIG).

Belongs to the ATPase A chain family. F-type ATPases have 2 components, CF(1) - the catalytic core - and CF(0) - the membrane proton channel. CF(1) has five subunits: alpha(3), beta(3), gamma(1), delta(1), epsilon(1). CF(0) has four main subunits: a, b, b' and c.

It localises to the plastid. Its subcellular location is the chloroplast thylakoid membrane. Key component of the proton channel; it plays a direct role in the translocation of protons across the membrane. The chain is ATP synthase subunit a, chloroplastic from Agrostis stolonifera (Creeping bentgrass).